The following is a 419-amino-acid chain: GTPase Obg (419 aa).

In terms of domain architecture, Obg spans 1-156 (MRFVDYVSIE…FYLDLQLKVM (156 aa)). One can recognise an OBG-type G domain in the interval 157 to 334 (ADIGLVGKPN…LEEKQKKLEI (178 aa)). GTP-binding positions include 163–170 (GKPNAGKS), 188–192 (FTTLV), 209–212 (DLPG), 278–281 (NKCD), and 315–317 (NII). Mg(2+)-binding residues include S170 and T190. One can recognise an OCT domain in the interval 342-419 (IEFNLKAPFL…RIYEFEFHWN (78 aa)).

The protein belongs to the TRAFAC class OBG-HflX-like GTPase superfamily. OBG GTPase family. In terms of assembly, monomer. The cofactor is Mg(2+).

It localises to the cytoplasm. An essential GTPase which binds GTP, GDP and possibly (p)ppGpp with moderate affinity, with high nucleotide exchange rates and a fairly low GTP hydrolysis rate. Plays a role in control of the cell cycle, stress response, ribosome biogenesis and in those bacteria that undergo differentiation, in morphogenesis control. This chain is GTPase Obg, found in Mesomycoplasma hyopneumoniae (strain 232) (Mycoplasma hyopneumoniae).